Here is a 273-residue protein sequence, read N- to C-terminus: NAD kinase (273 aa).

D53 (proton acceptor) is an active-site residue. Residues 53 to 54, R58, 128 to 129, D157, 168 to 173, and A192 each bind NAD(+); these read DG, NE, and TAYNFS.

The protein belongs to the NAD kinase family. The cofactor is a divalent metal cation.

Its subcellular location is the cytoplasm. It carries out the reaction NAD(+) + ATP = ADP + NADP(+) + H(+). In terms of biological role, involved in the regulation of the intracellular balance of NAD and NADP, and is a key enzyme in the biosynthesis of NADP. Catalyzes specifically the phosphorylation on 2'-hydroxyl of the adenosine moiety of NAD to yield NADP. The polypeptide is NAD kinase (Finegoldia magna (strain ATCC 29328 / DSM 20472 / WAL 2508) (Peptostreptococcus magnus)).